Reading from the N-terminus, the 259-residue chain is Proteasome subunit alpha (259 aa).

This sequence belongs to the peptidase T1A family. As to quaternary structure, the 20S proteasome core is composed of 14 alpha and 14 beta subunits that assemble into four stacked heptameric rings, resulting in a barrel-shaped structure. The two inner rings, each composed of seven catalytic beta subunits, are sandwiched by two outer rings, each composed of seven alpha subunits. The catalytic chamber with the active sites is on the inside of the barrel. Has a gated structure, the ends of the cylinder being occluded by the N-termini of the alpha-subunits. Is capped at one or both ends by the proteasome regulatory ATPase, PAN.

The protein resides in the cytoplasm. Its activity is regulated as follows. The formation of the proteasomal ATPase PAN-20S proteasome complex, via the docking of the C-termini of PAN into the intersubunit pockets in the alpha-rings, triggers opening of the gate for substrate entry. Interconversion between the open-gate and close-gate conformations leads to a dynamic regulation of the 20S proteasome proteolysis activity. Its function is as follows. Component of the proteasome core, a large protease complex with broad specificity involved in protein degradation. This Methanococcus vannielii (strain ATCC 35089 / DSM 1224 / JCM 13029 / OCM 148 / SB) protein is Proteasome subunit alpha.